We begin with the raw amino-acid sequence, 511 residues long: S-layer protein B (511 aa).

The N-terminal stretch at 1 to 24 is a signal peptide; that stretch reads MVKYMNLIVLGMLMFGVFVTLSLG. Residues 358–392 are a coiled coil; it reads IQRLQSEVSVLESEVDQLKVEIQSLNETLTLQASE. A helical transmembrane segment spans residues 487 to 507; it reads GGIILGVIALIIAIVAVVLVF.

This sequence belongs to the Sulfolobales SlaB family. In terms of assembly, the mushroom-shaped unit cells of the Sulfolobales' S-layers may consist of three SlaB subunits and six SlaA subunits.

The protein localises to the secreted. It is found in the cell wall. The protein resides in the S-layer. It localises to the cell membrane. S-layer small protein. May anchor the complex to the cell membrane. The protein is S-layer protein B of Acidianus ambivalens (Desulfurolobus ambivalens).